We begin with the raw amino-acid sequence, 229 residues long: MHSMEVGLVPAPAREPRLTRWLRRGSGILAHLIALGFTIFLTVLSRPGTSLFSWHPVFMALAFCLCMAEAILLFSPEHSLFFFCSRKTRIRLHWAGQTMAILCAVLGLGFIISSKIRSEMSHLVSWHSWIGALTLLATGGQALCGLCLLCPRAARVSRVARLKLYHLTCGLVVYLMATVTVLLGMYSVWFQAQIKGTAWYLCLGLPLYPALVIMHQISSSYLPRKKVEI.

The Cytoplasmic portion of the chain corresponds to 1–24 (MHSMEVGLVPAPAREPRLTRWLRR). The Cytochrome b561 domain maps to 22-224 (LRRGSGILAH…HQISSSYLPR (203 aa)). The chain crosses the membrane as a helical span at residues 25-45 (GSGILAHLIALGFTIFLTVLS). Over 46–53 (RPGTSLFS) the chain is Lumenal. Residues 54 to 74 (WHPVFMALAFCLCMAEAILLF) form a helical membrane-spanning segment. Heme b is bound at residue H55. Residues 75 to 91 (SPEHSLFFFCSRKTRIR) are Cytoplasmic-facing. The chain crosses the membrane as a helical span at residues 92 to 112 (LHWAGQTMAILCAVLGLGFII). 2 residues coordinate heme b: H93 and H127. Topologically, residues 113–128 (SSKIRSEMSHLVSWHS) are lumenal. The helical transmembrane segment at 129–149 (WIGALTLLATGGQALCGLCLL) threads the bilayer. Over 150–169 (CPRAARVSRVARLKLYHLTC) the chain is Cytoplasmic. Heme b is bound at residue H166. Residues 170–190 (GLVVYLMATVTVLLGMYSVWF) form a helical membrane-spanning segment. Residues 191 to 193 (QAQ) are Lumenal-facing. Residues 194–214 (IKGTAWYLCLGLPLYPALVIM) form a helical membrane-spanning segment. The Cytoplasmic portion of the chain corresponds to 215–229 (HQISSSYLPRKKVEI).

Requires heme b as cofactor.

The protein resides in the membrane. It catalyses the reaction monodehydro-L-ascorbate radical(out) + L-ascorbate(in) = monodehydro-L-ascorbate radical(in) + L-ascorbate(out). The catalysed reaction is Fe(3+)(out) + L-ascorbate(in) = monodehydro-L-ascorbate radical(in) + Fe(2+)(out) + H(+). In terms of biological role, probable transmembrane reductase that may use ascorbate as an electron donor and transfer electrons across membranes to reduce monodehydro-L-ascorbate radical and iron cations Fe(3+) in another cellular compartment. This chain is Probable transmembrane reductase CYB561D1, found in Mus musculus (Mouse).